The chain runs to 383 residues: Delta(12) acyl-lipid conjugase (11E,13E-forming) (383 aa).

The interval methionine 1–proline 30 is disordered. The segment covering threonine 12–histidine 26 has biased composition (basic and acidic residues). 2 consecutive transmembrane segments (helical) span residues valine 56–methionine 76 and valine 84–glycine 104. Residues histidine 105–histidine 109 carry the Histidine box-1 motif. A Histidine box-2 motif is present at residues histidine 141–histidine 145. 3 consecutive transmembrane segments (helical) span residues phenylalanine 179 to asparagine 199, valine 225 to alanine 245, and valine 249 to isoleucine 269. The short motif at histidine 315–histidine 319 is the Histidine box-3 element.

Belongs to the fatty acid desaturase type 1 family. As to expression, expressed in developing seeds, but not in leaves.

Its subcellular location is the membrane. It catalyses the reaction a (9Z,12Z)-octadecadienoyl-containing glycerolipid + 2 Fe(II)-[cytochrome b5] + O2 + 2 H(+) = a (9Z,11E,13E)-octadecatrienoyl-containing glycerolipid + 2 Fe(III)-[cytochrome b5] + 2 H2O. It carries out the reaction (9Z,12Z,15Z)-octadecatrienoyl-containing glycerolipid + 2 Fe(II)-[cytochrome b5] + O2 + 2 H(+) = a (9Z,11E,13E,15Z)-octadecatetraenoyl-containing glycerolipid + 2 Fe(III)-[cytochrome b5] + 2 H2O. Its pathway is lipid metabolism; polyunsaturated fatty acid biosynthesis. Functionally, converts linoleic acid to alpha-eleostearic acid (18:3(9Z,11E,13E)) and alpha-linolenic acid to alpha-parinaric acid (18:4(9Z,11E, 13E, 15Z)). Converts a single cis double bond at carbon 12 to two conjugated trans bonds at positions 11 and 13. The protein is Delta(12) acyl-lipid conjugase (11E,13E-forming) of Impatiens balsamina (Balsam).